The sequence spans 207 residues: MANHQIKAQRRKDEGKGASRRLRHAGMIPAIIYGGEQRPVSIQLNHEQIWLAQQNEWFYSSILDLNVDGAGAEKVLLRDLQRHPYRQLVMHVDFQRVSSDAKLSVAVPLHFINQATSPAGKVGGVVITHELNEVQVSCLPKDLPEFIEVDLSTLNVGHVIHLSDITFPIGVELSTRLDKEHDMAVVIAKHAVIEDDAPAEEGEGDSK.

The interval 1–20 (MANHQIKAQRRKDEGKGASR) is disordered.

The protein belongs to the bacterial ribosomal protein bL25 family. CTC subfamily. Part of the 50S ribosomal subunit; part of the 5S rRNA/L5/L18/L25 subcomplex. Contacts the 5S rRNA. Binds to the 5S rRNA independently of L5 and L18.

In terms of biological role, this is one of the proteins that binds to the 5S RNA in the ribosome where it forms part of the central protuberance. This chain is Large ribosomal subunit protein bL25, found in Xylella fastidiosa (strain M23).